The following is a 422-amino-acid chain: Testin (422 aa).

The PET domain occupies 92-199 (MILTNPVPAK…GDVKLPGELE (108 aa)). The interval 198–224 (LETKATDKNNVNSGDRSTSAAVGAMED) is disordered. Positions 205–217 (KNNVNSGDRSTSA) are enriched in polar residues. LIM zinc-binding domains follow at residues 234–297 (YSCY…CDSE), 299–359 (PRCA…KHAA), and 362–422 (QGCH…KMMS).

This sequence belongs to the prickle / espinas / testin family.

The protein localises to the cytoplasm. Its subcellular location is the cell junction. It is found in the focal adhesion. Functionally, scaffold protein that may play a role in cell adhesion, cell spreading and in the reorganization of the actin cytoskeleton. May play a role in the regulation of cell proliferation. May inhibit cell growth. The protein is Testin (TES) of Gallus gallus (Chicken).